A 102-amino-acid polypeptide reads, in one-letter code: Large ribosomal subunit protein uL24 (102 aa).

Belongs to the universal ribosomal protein uL24 family. As to quaternary structure, part of the 50S ribosomal subunit.

Its function is as follows. One of two assembly initiator proteins, it binds directly to the 5'-end of the 23S rRNA, where it nucleates assembly of the 50S subunit. In terms of biological role, one of the proteins that surrounds the polypeptide exit tunnel on the outside of the subunit. This Alkaliphilus oremlandii (strain OhILAs) (Clostridium oremlandii (strain OhILAs)) protein is Large ribosomal subunit protein uL24.